Here is a 264-residue protein sequence, read N- to C-terminus: Thymidylate synthase (264 aa).

Arg21 contacts dUMP. His51 is a (6R)-5,10-methylene-5,6,7,8-tetrahydrofolate binding site. 126 to 127 (RR) serves as a coordination point for dUMP. The active-site Nucleophile is the Cys146. Residues 166 to 169 (RSCD), Asn177, and 207 to 209 (HLY) contribute to the dUMP site. Asp169 provides a ligand contact to (6R)-5,10-methylene-5,6,7,8-tetrahydrofolate. Ala263 is a binding site for (6R)-5,10-methylene-5,6,7,8-tetrahydrofolate.

Belongs to the thymidylate synthase family. Bacterial-type ThyA subfamily. In terms of assembly, homodimer.

The protein resides in the cytoplasm. The enzyme catalyses dUMP + (6R)-5,10-methylene-5,6,7,8-tetrahydrofolate = 7,8-dihydrofolate + dTMP. The protein operates within pyrimidine metabolism; dTTP biosynthesis. Catalyzes the reductive methylation of 2'-deoxyuridine-5'-monophosphate (dUMP) to 2'-deoxythymidine-5'-monophosphate (dTMP) while utilizing 5,10-methylenetetrahydrofolate (mTHF) as the methyl donor and reductant in the reaction, yielding dihydrofolate (DHF) as a by-product. This enzymatic reaction provides an intracellular de novo source of dTMP, an essential precursor for DNA biosynthesis. This chain is Thymidylate synthase, found in Edwardsiella ictaluri (strain 93-146).